Consider the following 645-residue polypeptide: MILCRGLFMAVIGIDLGTTNSCVAVMEGGDAKAIENSEGARTTPSIVAFTDSEVLVGDPAKRQATTNAKNTIYASKRLIGRRYQDTRDIKTSYDIVSAKNGDAWIKVRDKDYSPSQIGALILEKMKETAERHLGCKVEKAVITVPAYFDDAQRQATKDAGRIAGLDVIRIINEPTAAALAYGLNKSDKQKVIAVYDLGGGTFDVSILEIADGVFEVKSTNGDTMLGGEDFDHAIMEYLMDDFKKSTGIDLHSDAMAMQRIKEAAEKAKIELSSRMETDINLPFLSSDSTGPKHLSLKLTRATFENLVSDLVKRTIEPCKKALKDAGISADKIDEVVLVGGMTRVPKIIQTVKEFFGKEPHKGVNPDEVVAIGAAIQGGILAGDVRDVLLLDVTPLSLGIETLGGVFTPLIERNTTIPTKKSQVFSTAEDGQTAVTIKVFQGERKMANDNKLLGQFSLEGIPPAPRGMPQIEVTFDIDANGIVHVSAKDKASGKEQAIRIQSSGGLTDDEIQNMIKEAESKAEEDEKRKKFVEVKNNAENLVHSTEKSLKEHGDKISNADKLDIENAIRDLKDCISKDNIEDTDTMQNKLDHLMKVSMKLGEALYSNTNNATAGDNNTTDTGSSSNSDGSKVVDSDYQEIDKKDGK.

A Phosphothreonine; by autocatalysis modification is found at Thr-201. Low complexity predominate over residues 606–629 (NTNNATAGDNNTTDTGSSSNSDGS). The disordered stretch occupies residues 606 to 645 (NTNNATAGDNNTTDTGSSSNSDGSKVVDSDYQEIDKKDGK). Residues 630–645 (KVVDSDYQEIDKKDGK) are compositionally biased toward basic and acidic residues.

The protein belongs to the heat shock protein 70 family.

Its function is as follows. Acts as a chaperone. The sequence is that of Chaperone protein DnaK from Ehrlichia ruminantium (strain Welgevonden).